Consider the following 211-residue polypeptide: Uridine kinase (211 aa).

15-22 contributes to the ATP binding site; it reads GGSGSGKT.

It belongs to the uridine kinase family.

It is found in the cytoplasm. The enzyme catalyses uridine + ATP = UMP + ADP + H(+). It catalyses the reaction cytidine + ATP = CMP + ADP + H(+). It participates in pyrimidine metabolism; CTP biosynthesis via salvage pathway; CTP from cytidine: step 1/3. Its pathway is pyrimidine metabolism; UMP biosynthesis via salvage pathway; UMP from uridine: step 1/1. The chain is Uridine kinase from Latilactobacillus sakei subsp. sakei (strain 23K) (Lactobacillus sakei subsp. sakei).